Consider the following 826-residue polypeptide: Dolichyl-diphosphooligosaccharide--protein glycosyltransferase subunit STT3B (826 aa).

The tract at residues 1 to 60 is disordered; sequence MAEPSAPESKHKSSLNSSPWSGLMALGNSRHGHHGPGAQCAHKAAGGVAPPKPAPAGLSG. Alanine 2 carries the N-acetylalanine modification. Topologically, residues 2–41 are cytoplasmic; the sequence is AEPSAPESKHKSSLNSSPWSGLMALGNSRHGHHGPGAQCA. Phosphoserine occurs at positions 13, 18, and 29. The chain crosses the membrane as a helical span at residues 42–86; the sequence is HKAAGGVAPPKPAPAGLSGGLSQPAGWQSLLSFTILFLAWLAGFS. At 87–173 the chain is on the lumenal side; it reads SRLFAVIRFE…VHIRDVCVFL (87 aa). The DXD motif 1 motif lies at 101-103; sequence EFD. Aspartate 103 lines the Mn(2+) pocket. A helical transmembrane segment spans residues 174–192; that stretch reads APTFSGLTSISTFLLTREL. The Cytoplasmic portion of the chain corresponds to 193–194; sequence WN. The helical transmembrane segment at 195 to 212 threads the bilayer; that stretch reads QGAGLLAACFIAIVPGYI. At 213-223 the chain is on the lumenal side; that stretch reads SRSVAGSFDNE. Mn(2+) contacts are provided by aspartate 221 and glutamate 223. The short motif at 221-223 is the DXD motif 2 element; the sequence is DNE. Residues 224 to 243 traverse the membrane as a helical segment; sequence GIAIFALQFTYYLWVKSVKT. The Cytoplasmic segment spans residues 244–245; the sequence is GS. Residues 246–260 traverse the membrane as a helical segment; the sequence is VFWTMCCCLSYFYMV. The Lumenal portion of the chain corresponds to 261–265; sequence SAWGG. The helical transmembrane segment at 266-282 threads the bilayer; it reads YVFIINLIPLHVFVLLL. Residues 283 to 287 lie on the Cytoplasmic side of the membrane; that stretch reads MQRYS. A helical membrane pass occupies residues 288–313; the sequence is KRVYIAYSTFYIVGLILSMQIPFVGF. At 314–321 the chain is on the lumenal side; the sequence is QPIRTSEH. Residues 322-341 traverse the membrane as a helical segment; it reads MAAAGVFALLQAYAFLQYLR. The Cytoplasmic segment spans residues 342–350; sequence DRLTKQEFQ. The helical transmembrane segment at 351-371 threads the bilayer; that stretch reads TLFFLGVSLAAGAVFLSVIYL. Residues 372-410 are Lumenal-facing; sequence TYTGYIAPWSGRFYSLWDTGYAKIHIPIIASVSEHQPTT. An SVSE motif motif is present at residues 402-405; it reads SVSE. The helical transmembrane segment at 411–433 threads the bilayer; it reads WVSFFFDLHILVCTFPAGLWFCI. Over 434 to 439 the chain is Cytoplasmic; the sequence is KNINDE. A helical transmembrane segment spans residues 440 to 456; it reads RVFVALYAISAVYFAGV. Residues 457–460 lie on the Lumenal side of the membrane; the sequence is MVRL. Arginine 459 is a dolichyl diphosphooligosaccharide binding site. Residues 461-482 traverse the membrane as a helical segment; sequence MLTLTPVVCMLSAIAFSNVFEH. The Cytoplasmic portion of the chain corresponds to 483–526; the sequence is YLGDDMKRENPPVEDSSDEDDKRNPGNLYDKAGKVRKHVTEQEK. A disordered region spans residues 490–512; that stretch reads RENPPVEDSSDEDDKRNPGNLYD. Residues serine 498 and serine 499 each carry the phosphoserine modification. A helical membrane pass occupies residues 527-552; it reads TEEGLGPNIKSIVTMLMLMLLMMFAV. Topologically, residues 553–826 are lumenal; it reads HCTWVTSNAY…KGKKISKKTV (274 aa). The interval 604 to 606 is interacts with target acceptor peptide in protein substrate; that stretch reads WWD. A WWDYG motif motif is present at residues 604-608; that stretch reads WWDYG. Tyrosine 609 lines the dolichyl diphosphooligosaccharide pocket. Asparagine 616 and asparagine 623 each carry an N-linked (GlcNAc...) asparagine glycan. A glycan (N-linked (GlcNAc...) (high mannose) asparagine) is linked at asparagine 627. An N-linked (GlcNAc...) asparagine glycan is attached at asparagine 641. Residues 671–678 carry the DK motif motif; the sequence is DINKFLWM.

This sequence belongs to the STT3 family. Component of the oligosaccharyltransferase (OST) complex. There are 2 OST complexes, OST-A and OST-B, which contain STT3A or STT3B as catalytic subunit, respectively. OST-A and OST-B contain common core subunits RPN1, RPN2, OST48, OST4, DAD1 and TMEM258, and OST-B contains either MAGT1 or TUSC3 as specific accessory subunit. Mg(2+) is required as a cofactor. Requires Mn(2+) as cofactor.

It localises to the endoplasmic reticulum. Its subcellular location is the endoplasmic reticulum membrane. It carries out the reaction a di-trans,poly-cis-dolichyl diphosphooligosaccharide + L-asparaginyl-[protein] = N(4)-(oligosaccharide-(1-&gt;4)-N-acetyl-beta-D-glucosaminyl-(1-&gt;4)-N-acetyl-beta-D-glucosaminyl)-L-asparaginyl-[protein] + a di-trans,poly-cis-dolichyl diphosphate + H(+). It functions in the pathway protein modification; protein glycosylation. Its function is as follows. Catalytic subunit of the oligosaccharyl transferase (OST) complex that catalyzes the initial transfer of a defined glycan (Glc(3)Man(9)GlcNAc(2) in eukaryotes) from the lipid carrier dolichol-pyrophosphate to an asparagine residue within an Asn-X-Ser/Thr consensus motif in nascent polypeptide chains, the first step in protein N-glycosylation. N-glycosylation occurs cotranslationally and the complex associates with the Sec61 complex at the channel-forming translocon complex that mediates protein translocation across the endoplasmic reticulum (ER). All subunits are required for a maximal enzyme activity. This subunit contains the active site and the acceptor peptide and donor lipid-linked oligosaccharide (LLO) binding pockets. STT3B is present in a small subset of OST complexes and mediates both cotranslational and post-translational N-glycosylation of target proteins: STT3B-containing complexes are required for efficient post-translational glycosylation and while they are less competent than STT3A-containing complexes for cotranslational glycosylation, they have the ability to mediate glycosylation of some nascent sites that are not accessible for STT3A. STT3B-containing complexes also act post-translationally and mediate modification of skipped glycosylation sites in unfolded proteins. Plays a role in ER-associated degradation (ERAD) pathway that mediates ubiquitin-dependent degradation of misfolded endoplasmic reticulum proteins by mediating N-glycosylation of unfolded proteins, which are then recognized by the ERAD pathway and targeted for degradation. The sequence is that of Dolichyl-diphosphooligosaccharide--protein glycosyltransferase subunit STT3B from Canis lupus familiaris (Dog).